Consider the following 517-residue polypeptide: Protein NETWORKED 4B (517 aa).

Disordered stretches follow at residues 1 to 29 (MASS…DSHN) and 101 to 159 (LQKN…EDGD). Basic residues predominate over residues 10–21 (KQFKRSMTKKSH). The region spanning 21–101 (HSWWWDSHNC…ERYDQASGEL (81 aa)) is the NAB domain. Residues 107–119 (SEIQSQSSLEISS) show a composition bias toward low complexity. Residues 121–135 (TKEKLSRRQSSHKEE) are compositionally biased toward basic and acidic residues. The stretch at 156–486 (EDGDEALIRR…EQKREAIRQL (331 aa)) forms a coiled coil.

This sequence belongs to the NET family.

Functionally, plant-specific actin binding protein. May be part of a membrane-cytoskeletal adapter complex. The sequence is that of Protein NETWORKED 4B from Arabidopsis thaliana (Mouse-ear cress).